Consider the following 184-residue polypeptide: Large ribosomal subunit protein uL22 (184 aa).

This sequence belongs to the universal ribosomal protein uL22 family. As to quaternary structure, part of the 50S ribosomal subunit.

In terms of biological role, this protein binds specifically to 23S rRNA. It makes multiple contacts with different domains of the 23S rRNA in the assembled 50S subunit and ribosome. Functionally, the globular domain of the protein is located near the polypeptide exit tunnel on the outside of the subunit, while an extended beta-hairpin is found that lines the wall of the exit tunnel in the center of the 70S ribosome. In Pyrobaculum calidifontis (strain DSM 21063 / JCM 11548 / VA1), this protein is Large ribosomal subunit protein uL22.